We begin with the raw amino-acid sequence, 506 residues long: 2,3-bisphosphoglycerate-independent phosphoglycerate mutase (506 aa).

Mn(2+) contacts are provided by Asp9 and Ser59. Residue Ser59 is the Phosphoserine intermediate of the active site. Residues His120, Arg149–Asp150, Arg181, Arg187, Arg254–Arg257, and Lys327 contribute to the substrate site. Mn(2+) is bound by residues Asp394, His398, Asp435, His436, and His452.

It belongs to the BPG-independent phosphoglycerate mutase family. Requires Mn(2+) as cofactor.

It carries out the reaction (2R)-2-phosphoglycerate = (2R)-3-phosphoglycerate. It participates in carbohydrate degradation; glycolysis; pyruvate from D-glyceraldehyde 3-phosphate: step 3/5. Catalyzes the interconversion of 2-phosphoglycerate and 3-phosphoglycerate. This Natronomonas pharaonis (strain ATCC 35678 / DSM 2160 / CIP 103997 / JCM 8858 / NBRC 14720 / NCIMB 2260 / Gabara) (Halobacterium pharaonis) protein is 2,3-bisphosphoglycerate-independent phosphoglycerate mutase.